Reading from the N-terminus, the 316-residue chain is tRNA uridine(34) hydroxylase (316 aa).

The Rhodanese domain maps to 123-217 (LDEDTVVIDA…YGKNPETRGE (95 aa)). Cys177 serves as the catalytic Cysteine persulfide intermediate.

This sequence belongs to the TrhO family.

The enzyme catalyses uridine(34) in tRNA + AH2 + O2 = 5-hydroxyuridine(34) in tRNA + A + H2O. Its function is as follows. Catalyzes oxygen-dependent 5-hydroxyuridine (ho5U) modification at position 34 in tRNAs. This Enterococcus faecalis (strain ATCC 700802 / V583) protein is tRNA uridine(34) hydroxylase.